The following is a 409-amino-acid chain: Elongation factor Tu, plastid (409 aa).

The 205-residue stretch at lysine 10 to valine 214 folds into the tr-type G domain. Positions glycine 19 to threonine 26 are G1. Position 19–26 (glycine 19–threonine 26) interacts with GTP. Residue threonine 26 participates in Mg(2+) binding. Positions glycine 60–asparagine 64 are G2. The tract at residues aspartate 81 to glycine 84 is G3. GTP is bound by residues aspartate 81–histidine 85 and asparagine 136–aspartate 139. The segment at asparagine 136 to aspartate 139 is G4. Residues serine 174 to leucine 176 are G5.

It belongs to the TRAFAC class translation factor GTPase superfamily. Classic translation factor GTPase family. EF-Tu/EF-1A subfamily.

The protein localises to the plastid. The catalysed reaction is GTP + H2O = GDP + phosphate + H(+). In terms of biological role, GTP hydrolase that promotes the GTP-dependent binding of aminoacyl-tRNA to the A-site of ribosomes during protein biosynthesis. This chain is Elongation factor Tu, plastid (tufA), found in Helicosporidium sp. subsp. Simulium jonesii (Green alga).